A 261-amino-acid polypeptide reads, in one-letter code: uncharacterized protein (261 aa).

This is an uncharacterized protein from Enterobacteriaceae (Bacteriophage P2).